We begin with the raw amino-acid sequence, 226 residues long: Guanylate kinase (226 aa).

A Guanylate kinase-like domain is found at 13–193 (GLLLVLSAPS…ALAQLQAIVR (181 aa)). 20–27 (APSGAGKT) provides a ligand contact to ATP.

The protein belongs to the guanylate kinase family.

Its subcellular location is the cytoplasm. The catalysed reaction is GMP + ATP = GDP + ADP. In terms of biological role, essential for recycling GMP and indirectly, cGMP. The protein is Guanylate kinase of Anaeromyxobacter dehalogenans (strain 2CP-C).